The chain runs to 457 residues: MVIQRNSILLLIIIFASSISTCRSNVIDDNLFKQVYDNILEQEFAHDFQAYLSYLSKNIESNNNIDKVDKNGIKVINVLSFGAKGDGKTYDNIAFEQAWNEACSSRTPVQFVVPKNKNYLLKQITFSGPCRSSISVKIFGSLEASSKISDYKDRRLWIAFDSVQNLVVGGGGTINGNGQVWWPSSCKINKSLPCRDAPTALTFWNCKNLKVNNLKSKNAQQIHIKFESCTNVVASNLMINASAKSPNTDGVHVSNTQYIQISDTIIGTGDDCISIVSGSQNVQATNITCGPGHGISIGSLGSGNSEAYVSNVTVNEAKIIGAENGVRIKTWQGGSGQASNIKFLNVEMQDVKYPIIIDQNYCDRVEPCIQQFSAVQVKNVVYENIKGTSATKVAIKFDCSTNFPCEGIIMENINLVGESGKPSEATCKNVHFNNAEHVTPHCTSLEISEDEALLYNY.

The signal sequence occupies residues 1-24 (MVIQRNSILLLIIIFASSISTCRS). Residues 25–71 (NVIDDNLFKQVYDNILEQEFAHDFQAYLSYLSKNIESNNNIDKVDKN) constitute a propeptide that is removed on maturation. N-linked (GlcNAc...) asparagine glycans are attached at residues Asn189 and Asn240. PbH1 repeat units lie at residues 228 to 255 (SCTN…HVSN) and 256 to 277 (TQYI…SIVS). Asp270 acts as the Proton donor in catalysis. N-linked (GlcNAc...) asparagine glycosylation is present at Asn286. The active site involves His293. PbH1 repeat units lie at residues 309-330 (VSNV…RIKT) and 338-359 (ASNI…IIDQ). Asn311 carries an N-linked (GlcNAc...) asparagine glycan. Residues 445 to 457 (LEISEDEALLYNY) constitute a propeptide that is removed on maturation.

The protein belongs to the glycosyl hydrolase 28 family. Monomer PG2 (isoenzymes PG2A and PG2B). Also forms heterodimers called polygalacturonase 1 (PG1) with the beta subunit GP1. N-glycosylated. PG2B isozyme has a greater degree of glycosylation than PG2A. Expressed only in ripening fruits (at protein level).

The protein localises to the secreted. The protein resides in the extracellular space. Its subcellular location is the apoplast. It localises to the cell wall. The enzyme catalyses (1,4-alpha-D-galacturonosyl)n+m + H2O = (1,4-alpha-D-galacturonosyl)n + (1,4-alpha-D-galacturonosyl)m.. Catalytic subunit of the polygalacturonase isozyme 1 and 2 (PG1 and PG2). Acts in concert with the pectinesterase, in the ripening process. Is involved in cell wall metabolism, specifically in polyuronide degradation. The depolymerization and solubilization of cell wall polyuronides mediated by PG2 during ripening seems to be limited by the beta subunit GP1, probably by recruiting PG2 to form PG1. The sequence is that of Polygalacturonase-2 (PG2) from Solanum lycopersicum (Tomato).